A 175-amino-acid chain; its full sequence is MALLEIIHYPSKILRTISKEVVSFDAKFHQQLDDMHETMIASEGIGLAAIQVGLPLRMLLINLPREDGVQHKEDCLEIINPKFIETKGSIMFKEGCLSVPGFYEEVERFEKVKIEYQNRFAKVKVLEASELLAVAIQHEIDHLNGVLFVDKLSILKRKKFEKELKELNKNPKNKS.

Fe cation is bound by residues cysteine 96 and histidine 138. Residue glutamate 139 is part of the active site. Histidine 142 provides a ligand contact to Fe cation.

The protein belongs to the polypeptide deformylase family. It depends on Fe(2+) as a cofactor.

The catalysed reaction is N-terminal N-formyl-L-methionyl-[peptide] + H2O = N-terminal L-methionyl-[peptide] + formate. Removes the formyl group from the N-terminal Met of newly synthesized proteins. Requires at least a dipeptide for an efficient rate of reaction. N-terminal L-methionine is a prerequisite for activity but the enzyme has broad specificity at other positions. The chain is Peptide deformylase from Helicobacter acinonychis (strain Sheeba).